We begin with the raw amino-acid sequence, 360 residues long: Phenylalanine--tRNA ligase alpha subunit (360 aa).

E260 lines the Mg(2+) pocket.

Belongs to the class-II aminoacyl-tRNA synthetase family. Phe-tRNA synthetase alpha subunit type 1 subfamily. Tetramer of two alpha and two beta subunits. The cofactor is Mg(2+).

The protein resides in the cytoplasm. It catalyses the reaction tRNA(Phe) + L-phenylalanine + ATP = L-phenylalanyl-tRNA(Phe) + AMP + diphosphate + H(+). The chain is Phenylalanine--tRNA ligase alpha subunit from Rhizobium johnstonii (strain DSM 114642 / LMG 32736 / 3841) (Rhizobium leguminosarum bv. viciae).